The primary structure comprises 379 residues: (R)-2-hydroxyglutaryl-CoA dehydratase, subunit beta (379 aa).

It belongs to the FldB/FldC dehydratase alpha/beta subunit family. The (R)-2-hydroxyglutaryl-CoA dehydratase enzyme system is a heterodimer composed of an alpha subunit (HgdA) and a beta subunit (HgdB). The cofactor is [4Fe-4S] cluster. FMN serves as cofactor. Mg(2+) is required as a cofactor.

The protein localises to the cytoplasm. It catalyses the reaction (R)-2-hydroxyglutaryl-CoA = (2E)-glutaconyl-CoA + H2O. It functions in the pathway amino-acid degradation; L-glutamate degradation via hydroxyglutarate pathway; crotonoyl-CoA from L-glutamate: step 4/5. Its activity is regulated as follows. Activated by the HgdC. Reversibly inactivated by oxidants such as 2-nitrophenol, 3-nitrophenol, 4-nitrophenol, 4-nitrobenzoate, carbonyl cyanide 4-(trifluoromethoxy)phenylhydrazone (FCCP) and chloramphenicol. Irreversibly inactivated by oxidants such as hydroxylamine and nitrite. Involved in the fermentation of L-glutamate via the hydroxyglutarate pathway. Catalyzes the reversible syn-elimination of water from (R)-2-hydroxyglutaryl-CoA to yield (E)-glutaconyl-CoA. The dehydration mechanism involves a transient one electron reduction of the thioester from (R)-2-hydroxyglutaryl-CoA, generating a ketyl radical. Prior to (E)-glutaconyl-CoA formation, the ketyl radical is subsequently reoxidized by electron transfer back to the HgdA-HgdB complex (CompD) to avoid change in oxidation state of the substrate. The appropriate redox state of dehydratase HgdA-HgdB complex (CompD) is maintained by HgdC (CompA) via hydrolysis of ATP and ATP-dependent electron transfer. Since the electron is recycled, the dehydratase is able to perform several turnovers with only catalytic amounts of ATP and substoichiometric amounts of HgdC (CompA). In Acidaminococcus fermentans (strain ATCC 25085 / DSM 20731 / CCUG 9996 / CIP 106432 / VR4), this protein is (R)-2-hydroxyglutaryl-CoA dehydratase, subunit beta.